Consider the following 237-residue polypeptide: NAD-dependent protein deacylase (237 aa).

Residues 1–235 form the Deacetylase sirtuin-type domain; that stretch reads MRVVVLSGAG…PGLLQRLPAL (235 aa). 8 to 28 serves as a coordination point for NAD(+); the sequence is GAGISAESDVPTFRDDKNGLW. Residues Tyr-53 and Arg-56 each coordinate substrate. 86 to 89 is a binding site for NAD(+); it reads QNVD. His-104 acts as the Proton acceptor in catalysis. The Zn(2+) site is built by Cys-112, Cys-115, Cys-138, and Cys-140. NAD(+) is bound by residues 177–179, 203–205, and Ala-221; these read GTS and NPE.

The protein belongs to the sirtuin family. Class III subfamily. It depends on Zn(2+) as a cofactor.

The protein localises to the cytoplasm. It carries out the reaction N(6)-acetyl-L-lysyl-[protein] + NAD(+) + H2O = 2''-O-acetyl-ADP-D-ribose + nicotinamide + L-lysyl-[protein]. It catalyses the reaction N(6)-succinyl-L-lysyl-[protein] + NAD(+) + H2O = 2''-O-succinyl-ADP-D-ribose + nicotinamide + L-lysyl-[protein]. Its function is as follows. NAD-dependent lysine deacetylase and desuccinylase that specifically removes acetyl and succinyl groups on target proteins. Modulates the activities of several proteins which are inactive in their acylated form. This chain is NAD-dependent protein deacylase, found in Mycobacterium leprae (strain TN).